Reading from the N-terminus, the 505-residue chain is Succinyl-CoA:acetate CoA-transferase (505 aa).

269–273 serves as a coordination point for CoA; it reads GVGNV. The active-site 5-glutamyl coenzyme A thioester intermediate is the Glu-294. CoA contacts are provided by Ile-364, Asn-384, Gly-388, and Lys-408.

It belongs to the acetyl-CoA hydrolase/transferase family. Homodimer.

It catalyses the reaction succinyl-CoA + acetate = succinate + acetyl-CoA. It functions in the pathway metabolic intermediate biosynthesis; acetyl-CoA biosynthesis. Subject to competitive inhibition by coenzyme A (CoA). Functionally, utilizes succinyl-CoA to convert toxic acetate to acetyl-CoA and succinate. Required for growth on acetic acid and for resistance to high levels of acetic acid. Also has low activity with acetoacetate as substrate. This is Succinyl-CoA:acetate CoA-transferase from Acetobacter aceti.